The following is a 304-amino-acid chain: Nucleotide-binding protein RHA1_ro07174 (304 aa).

24 to 31 (GLSGAGLQ) contacts ATP. 75–78 (DVRS) serves as a coordination point for GTP.

Belongs to the RapZ-like family.

Its function is as follows. Displays ATPase and GTPase activities. In Rhodococcus jostii (strain RHA1), this protein is Nucleotide-binding protein RHA1_ro07174.